We begin with the raw amino-acid sequence, 247 residues long: Protein-L-isoaspartate O-methyltransferase 2 (247 aa).

The active site involves serine 97.

It belongs to the methyltransferase superfamily. L-isoaspartyl/D-aspartyl protein methyltransferase family.

The protein localises to the cytoplasm. It catalyses the reaction [protein]-L-isoaspartate + S-adenosyl-L-methionine = [protein]-L-isoaspartate alpha-methyl ester + S-adenosyl-L-homocysteine. In terms of biological role, catalyzes the methyl esterification of L-isoaspartyl residues in peptides and proteins that result from spontaneous decomposition of normal L-aspartyl and L-asparaginyl residues. It plays a role in the repair and/or degradation of damaged proteins. This is Protein-L-isoaspartate O-methyltransferase 2 from Syntrophobacter fumaroxidans (strain DSM 10017 / MPOB).